A 445-amino-acid polypeptide reads, in one-letter code: Tubulin beta-3 chain (445 aa).

GTP-binding residues include Gln-11, Glu-69, Ser-138, Gly-142, Thr-143, Gly-144, Asn-204, and Asn-226. Glu-69 is a Mg(2+) binding site. Polar residues predominate over residues 417 to 426 (DLVSEYQQYQ). A disordered region spans residues 417–445 (DLVSEYQQYQEASADDEADEFDEEEGDEE). Acidic residues predominate over residues 429–445 (SADDEADEFDEEEGDEE).

It belongs to the tubulin family. In terms of assembly, dimer of alpha and beta chains. A typical microtubule is a hollow water-filled tube with an outer diameter of 25 nm and an inner diameter of 15 nM. Alpha-beta heterodimers associate head-to-tail to form protofilaments running lengthwise along the microtubule wall with the beta-tubulin subunit facing the microtubule plus end conferring a structural polarity. Microtubules usually have 13 protofilaments but different protofilament numbers can be found in some organisms and specialized cells. The cofactor is Mg(2+).

It localises to the cytoplasm. Its subcellular location is the cytoskeleton. In terms of biological role, tubulin is the major constituent of microtubules, a cylinder consisting of laterally associated linear protofilaments composed of alpha- and beta-tubulin heterodimers. Microtubules grow by the addition of GTP-tubulin dimers to the microtubule end, where a stabilizing cap forms. Below the cap, tubulin dimers are in GDP-bound state, owing to GTPase activity of alpha-tubulin. This chain is Tubulin beta-3 chain (TUBB3), found in Oomycete-like sp. (strain MacKay2000).